The primary structure comprises 429 residues: Gamma-glutamyl phosphate reductase (429 aa).

It belongs to the gamma-glutamyl phosphate reductase family.

It localises to the cytoplasm. It carries out the reaction L-glutamate 5-semialdehyde + phosphate + NADP(+) = L-glutamyl 5-phosphate + NADPH + H(+). The protein operates within amino-acid biosynthesis; L-proline biosynthesis; L-glutamate 5-semialdehyde from L-glutamate: step 2/2. Its function is as follows. Catalyzes the NADPH-dependent reduction of L-glutamate 5-phosphate into L-glutamate 5-semialdehyde and phosphate. The product spontaneously undergoes cyclization to form 1-pyrroline-5-carboxylate. This chain is Gamma-glutamyl phosphate reductase, found in Sphingopyxis alaskensis (strain DSM 13593 / LMG 18877 / RB2256) (Sphingomonas alaskensis).